Consider the following 459-residue polypeptide: VGFKAGVKDYKLTYYTPDYETKDTDILAAFRVTPQPGVPPEEAGAAVAAESSTGTWTTVWTDGLTSLDRYKGRCYHIEPVAGEETQFIAYVAYPLDLFEEGSVTNMFTSIVGNVFGFKALRALRLEDLRIPTAYTKTFQGPPHGIQVERDKLNKYGRPLLGCTIKPKLGLSAKNYGRAVYECLRGGLDFTKDDENVNSQPFMRWRDRFLFCAEAIYKAQAETGEIKGHYLNATAGTCEDMMKRAVFARELGVPIVMHDYLTGGFTANTTLAHYCRDNGLLLHIHRAMHAVIDRQKNHGMHFRVLAKALRMSGGDHIHAGTVVGKLEGEREITLGFVDLLRDDFIEKDRSRGIYFTQDWVSLPGVLPVASGGIHVWHMPALTEIFGDDSVLQFGGGTLGHPWGNAPGAVANRVALEACVQARNEGRDLAREDNEIIREASKWSPELAAACEIWKEIKFEF.

K4 bears the N6,N6,N6-trimethyllysine mark. N113 and T163 together coordinate substrate. K165 acts as the Proton acceptor in catalysis. K167 contributes to the substrate binding site. Mg(2+) is bound by residues K191, D193, and E194. Position 191 is an N6-carboxylysine (K191). H284 acts as the Proton acceptor in catalysis. Residues R285, H317, and S369 each contribute to the substrate site.

It belongs to the RuBisCO large chain family. Type I subfamily. As to quaternary structure, heterohexadecamer of 8 large chains and 8 small chains; disulfide-linked. The disulfide link is formed within the large subunit homodimers. Requires Mg(2+) as cofactor. Post-translationally, the disulfide bond which can form in the large chain dimeric partners within the hexadecamer appears to be associated with oxidative stress and protein turnover.

The protein resides in the plastid. It localises to the chloroplast. It catalyses the reaction 2 (2R)-3-phosphoglycerate + 2 H(+) = D-ribulose 1,5-bisphosphate + CO2 + H2O. The enzyme catalyses D-ribulose 1,5-bisphosphate + O2 = 2-phosphoglycolate + (2R)-3-phosphoglycerate + 2 H(+). RuBisCO catalyzes two reactions: the carboxylation of D-ribulose 1,5-bisphosphate, the primary event in carbon dioxide fixation, as well as the oxidative fragmentation of the pentose substrate in the photorespiration process. Both reactions occur simultaneously and in competition at the same active site. The protein is Ribulose bisphosphate carboxylase large chain of Nyssa ogeche (Ogeechee tupelo).